The primary structure comprises 245 residues: UPF0246 protein cgR_1824 (245 aa).

The protein belongs to the UPF0246 family.

In Corynebacterium glutamicum (strain R), this protein is UPF0246 protein cgR_1824.